Consider the following 483-residue polypeptide: Serralysin (483 aa).

A Zn(2+)-binding site is contributed by His184. Residue Glu185 is part of the active site. Zn(2+) contacts are provided by His188 and His194. Residues Arg263, Asp266, Asp295, Gly297, Gly298, Asp300, Thr337, and Glu339 each contribute to the Ca(2+) site. Hemolysin-type calcium-binding repeat units follow at residues 342 to 359 (IGGSGNDILIGNDAENIL) and 360 to 377 (KGGAGDDIIYGGLGADQL).

It belongs to the peptidase M10B family. The cofactor is Zn(2+). It depends on Ca(2+) as a cofactor.

The protein localises to the secreted. The enzyme catalyses Preferential cleavage of bonds with hydrophobic residues in P1'.. Its activity is regulated as follows. Inhibited by 8 mM 1,10-phenanthroline and 10 mM EDTA, but not by PMSF. In terms of biological role, involved in the inhibition of insect antibacterial peptides. Reduces the antibacterial activity of G.mellonella hemolymph by 50%. Reduces the antibacterial activity of cecropin A by 80% and cecropin B by 75%. The chain is Serralysin from Photorhabdus sp. (strain Az29).